The chain runs to 254 residues: UPF0246 protein FTM_0239 (254 aa).

It belongs to the UPF0246 family.

The chain is UPF0246 protein FTM_0239 from Francisella tularensis subsp. mediasiatica (strain FSC147).